A 252-amino-acid polypeptide reads, in one-letter code: Thiazole synthase (252 aa).

Lysine 98 functions as the Schiff-base intermediate with DXP in the catalytic mechanism. Residues glycine 159, 185-186 (AG), and 207-208 (AT) contribute to the 1-deoxy-D-xylulose 5-phosphate site.

It belongs to the ThiG family. In terms of assembly, homotetramer. Forms heterodimers with either ThiH or ThiS.

Its subcellular location is the cytoplasm. It catalyses the reaction [ThiS sulfur-carrier protein]-C-terminal-Gly-aminoethanethioate + 2-iminoacetate + 1-deoxy-D-xylulose 5-phosphate = [ThiS sulfur-carrier protein]-C-terminal Gly-Gly + 2-[(2R,5Z)-2-carboxy-4-methylthiazol-5(2H)-ylidene]ethyl phosphate + 2 H2O + H(+). Its pathway is cofactor biosynthesis; thiamine diphosphate biosynthesis. Functionally, catalyzes the rearrangement of 1-deoxy-D-xylulose 5-phosphate (DXP) to produce the thiazole phosphate moiety of thiamine. Sulfur is provided by the thiocarboxylate moiety of the carrier protein ThiS. In vitro, sulfur can be provided by H(2)S. The chain is Thiazole synthase from Mycobacterium avium (strain 104).